The primary structure comprises 277 residues: Indole-3-glycerol phosphate synthase (277 aa).

This sequence belongs to the TrpC family.

It catalyses the reaction 1-(2-carboxyphenylamino)-1-deoxy-D-ribulose 5-phosphate + H(+) = (1S,2R)-1-C-(indol-3-yl)glycerol 3-phosphate + CO2 + H2O. Its pathway is amino-acid biosynthesis; L-tryptophan biosynthesis; L-tryptophan from chorismate: step 4/5. The polypeptide is Indole-3-glycerol phosphate synthase (Pseudomonas putida (strain W619)).